The sequence spans 1077 residues: Ubiquitin-activating enzyme E1 2 (1077 aa).

The tract at residues 16–36 (SPMKKRRIDHTESADGSAINA) is disordered. Residues alanine 499, aspartate 525, arginine 536, lysine 549, and 597-598 (DN) each bind ATP. The Glycyl thioester intermediate role is filled by cysteine 653.

It belongs to the ubiquitin-activating E1 family. In terms of assembly, monomer. In terms of tissue distribution, expressed in leaves, flowers, roots and stems. Detected in germinating seeds, cotyledons, hypocotyls, vascular tissues, anthers, filaments, pollen, style, stigma, sepals, petals, ovary, developing ovules, funiculi and silique walls.

The enzyme catalyses ATP + ubiquitin + [E1 ubiquitin-activating enzyme]-L-cysteine = AMP + diphosphate + S-ubiquitinyl-[E1 ubiquitin-activating enzyme]-L-cysteine.. The protein operates within protein modification; protein ubiquitination. Its function is as follows. Activates ubiquitin by first adenylating its C-terminal glycine residue with ATP, and thereafter linking this residue to the side chain of a cysteine residue in E1, yielding a ubiquitin-E1 thioester and free AMP. The protein is Ubiquitin-activating enzyme E1 2 (UBA2) of Arabidopsis thaliana (Mouse-ear cress).